The following is a 137-amino-acid chain: Large ribosomal subunit protein uL16c (137 aa).

Belongs to the universal ribosomal protein uL16 family. In terms of assembly, part of the 50S ribosomal subunit.

The protein resides in the plastid. The protein is Large ribosomal subunit protein uL16c of Cuscuta reflexa (Southern Asian dodder).